The primary structure comprises 1223 residues: Rho family-interacting cell polarization regulator 1 (1223 aa).

S22 is subject to Phosphoserine. Positions 89–114 (LTAYLEVHQQEQEKLQGQIRESKRNS) form a coiled coil. A phosphoserine mark is found at S349 and S351. T355 is modified (phosphothreonine). The interval 375-411 (NGTAWSLSSESSDDSSSPQLSGTARHSPAPRPLVQQP) is disordered. The span at 380–395 (SLSSESSDDSSSPQLS) shows a compositional bias: low complexity. S456 and S459 each carry phosphoserine. Disordered stretches follow at residues 475-769 (ESLA…APQH) and 856-889 (FLNEDEDEDNDVPGDRPPSSPEAGAEDSIDSPSA). Composition is skewed to low complexity over residues 505 to 523 (GHSATSSTLGTTGSVPTST) and 546 to 564 (PGPTHTTTGSTYSAITTTH). Polar residues predominate over residues 565–592 (SAPSPLTHTTTGSTHKPIISTLTTTGPT). 2 stretches are compositionally biased toward low complexity: residues 601 to 650 (TTTS…PTPS) and 659 to 675 (TSPTHPTTSPTHPTTSP). Positions 680–695 (VSPSTSLELATLSSPS) are enriched in polar residues. Residues 858 to 867 (NEDEDEDNDV) show a composition bias toward acidic residues. A phosphoserine mark is found at S874 and S875.

The protein belongs to the RIPOR family. Interacts (via N-terminus) with RHOA (GTP-bound form); this interaction links active RHOA to STK24 and STK26 kinases. Interacts with RHOB. Interacts with RHOC. Interacts (via C-terminus) with PDCD10; this interaction occurs in a Rho-independent manner. Interacts (via C-terminus) with STK24; this interaction occurs in a PDCD10-dependent and Rho-independent manner. Interacts (via C-terminus) with STK26; this interaction occurs in a PDCD10-dependent and Rho-independent manner. Interacts (via N-terminus) with 14-3-3 proteins; these interactions occur in a Rho-dependent manner.

It is found in the cytoplasm. Its subcellular location is the golgi apparatus. Functionally, downstream effector protein for Rho-type small GTPases that plays a role in cell polarity and directional migration. Acts as an adapter protein, linking active Rho proteins to STK24 and STK26 kinases, and hence positively regulates Golgi reorientation in polarized cell migration upon Rho activation. Involved in the subcellular relocation of STK26 from the Golgi to cytoplasm punctae in a Rho- and PDCD10-dependent manner upon serum stimulation. The polypeptide is Rho family-interacting cell polarization regulator 1 (RIPOR1) (Homo sapiens (Human)).